A 240-amino-acid polypeptide reads, in one-letter code: Sugar fermentation stimulation protein homolog (240 aa).

It belongs to the SfsA family.

This Saccharolobus solfataricus (strain ATCC 35092 / DSM 1617 / JCM 11322 / P2) (Sulfolobus solfataricus) protein is Sugar fermentation stimulation protein homolog.